We begin with the raw amino-acid sequence, 121 residues long: Large ribosomal subunit protein bL12 (121 aa).

The protein belongs to the bacterial ribosomal protein bL12 family. In terms of assembly, homodimer. Part of the ribosomal stalk of the 50S ribosomal subunit. Forms a multimeric L10(L12)X complex, where L10 forms an elongated spine to which 2 to 4 L12 dimers bind in a sequential fashion. Binds GTP-bound translation factors.

Forms part of the ribosomal stalk which helps the ribosome interact with GTP-bound translation factors. Is thus essential for accurate translation. The chain is Large ribosomal subunit protein bL12 from Streptococcus agalactiae serotype Ia (strain ATCC 27591 / A909 / CDC SS700).